We begin with the raw amino-acid sequence, 657 residues long: tRNA 5-methylaminomethyl-2-thiouridine biosynthesis bifunctional protein MnmC (657 aa).

Residues 1-233 (MPRGLILATP…KRDMTVAAFP (233 aa)) are tRNA (mnm(5)s(2)U34)-methyltransferase. An FAD-dependent cmnm(5)s(2)U34 oxidoreductase region spans residues 256–657 (LGAGLAGCSV…RALRHGKHAA (402 aa)).

It in the N-terminal section; belongs to the methyltransferase superfamily. tRNA (mnm(5)s(2)U34)-methyltransferase family. The protein in the C-terminal section; belongs to the DAO family. FAD serves as cofactor.

The protein resides in the cytoplasm. It carries out the reaction 5-aminomethyl-2-thiouridine(34) in tRNA + S-adenosyl-L-methionine = 5-methylaminomethyl-2-thiouridine(34) in tRNA + S-adenosyl-L-homocysteine + H(+). Functionally, catalyzes the last two steps in the biosynthesis of 5-methylaminomethyl-2-thiouridine (mnm(5)s(2)U) at the wobble position (U34) in tRNA. Catalyzes the FAD-dependent demodification of cmnm(5)s(2)U34 to nm(5)s(2)U34, followed by the transfer of a methyl group from S-adenosyl-L-methionine to nm(5)s(2)U34, to form mnm(5)s(2)U34. In Ralstonia nicotianae (strain ATCC BAA-1114 / GMI1000) (Ralstonia solanacearum), this protein is tRNA 5-methylaminomethyl-2-thiouridine biosynthesis bifunctional protein MnmC.